We begin with the raw amino-acid sequence, 190 residues long: Large ribosomal subunit protein uL5 (190 aa).

The protein belongs to the universal ribosomal protein uL5 family. As to quaternary structure, part of the 50S ribosomal subunit; contacts the 5S rRNA and probably tRNA. Forms a bridge to the 30S subunit in the 70S ribosome.

Its function is as follows. This is one of the proteins that bind and probably mediate the attachment of the 5S RNA into the large ribosomal subunit, where it forms part of the central protuberance. In the 70S ribosome it contacts protein S13 of the 30S subunit (bridge B1b), connecting the 2 subunits; this bridge is implicated in subunit movement. May contact the P site tRNA; the 5S rRNA and some of its associated proteins might help stabilize positioning of ribosome-bound tRNAs. In Methanocaldococcus jannaschii (strain ATCC 43067 / DSM 2661 / JAL-1 / JCM 10045 / NBRC 100440) (Methanococcus jannaschii), this protein is Large ribosomal subunit protein uL5.